The primary structure comprises 1031 residues: Sister chromatid cohesion 1 protein 4 (1031 aa).

Residues 461 to 481 form a disordered region; that stretch reads TPDKEDPGTCNDDAGNNNITG. A Nuclear localization signal motif is present at residues 545–552; it reads TKRLRSAP. Disordered regions lie at residues 661 to 703, 742 to 772, and 803 to 835; these read VEEN…EELK, EKLDRVEDLQVEESHENHDGEGGQDVCADPN, and ELPHEDEKTDASAEVSELGRDDQTPCDNTVGST. Basic and acidic residues-rich tracts occupy residues 742–762 and 803–825; these read EKLDRVEDLQVEESHENHDGE and ELPHEDEKTDASAEVSELGRDDQ.

The protein belongs to the rad21 family. In terms of assembly, component of the cohesin complex. In terms of tissue distribution, expressed in tissues containing dividing cells such as seedlings, flower buds, flowers and inflorescence meristem tissue.

Its subcellular location is the nucleus. It localises to the chromosome. The protein localises to the centromere. Its function is as follows. Involved in sister chromatid and centromere cohesion during mitosis. The sequence is that of Sister chromatid cohesion 1 protein 4 (SYN4) from Arabidopsis thaliana (Mouse-ear cress).